The chain runs to 69 residues: Cold shock-like protein CspE (69 aa).

The region spanning 6 to 66 (GNVKWFNESK…GAKGPSAANV (61 aa)) is the CSD domain.

Its subcellular location is the cytoplasm. The protein is Cold shock-like protein CspE (cspE) of Escherichia coli O6:H1 (strain CFT073 / ATCC 700928 / UPEC).